We begin with the raw amino-acid sequence, 165 residues long: Cyclic pyranopterin monophosphate synthase (165 aa).

Substrate is bound by residues 76 to 78 (LCH) and 114 to 115 (ME). Asp-129 is a catalytic residue.

Belongs to the MoaC family. As to quaternary structure, homohexamer; trimer of dimers.

It carries out the reaction (8S)-3',8-cyclo-7,8-dihydroguanosine 5'-triphosphate = cyclic pyranopterin phosphate + diphosphate. It participates in cofactor biosynthesis; molybdopterin biosynthesis. Catalyzes the conversion of (8S)-3',8-cyclo-7,8-dihydroguanosine 5'-triphosphate to cyclic pyranopterin monophosphate (cPMP). In Brucella melitensis biotype 2 (strain ATCC 23457), this protein is Cyclic pyranopterin monophosphate synthase.